Here is a 197-residue protein sequence, read N- to C-terminus: NADH-quinone oxidoreductase subunit C (197 aa).

The protein belongs to the complex I 30 kDa subunit family. In terms of assembly, NDH-1 is composed of 14 different subunits. Subunits NuoB, C, D, E, F, and G constitute the peripheral sector of the complex.

It localises to the cell inner membrane. The catalysed reaction is a quinone + NADH + 5 H(+)(in) = a quinol + NAD(+) + 4 H(+)(out). In terms of biological role, NDH-1 shuttles electrons from NADH, via FMN and iron-sulfur (Fe-S) centers, to quinones in the respiratory chain. The immediate electron acceptor for the enzyme in this species is believed to be ubiquinone. Couples the redox reaction to proton translocation (for every two electrons transferred, four hydrogen ions are translocated across the cytoplasmic membrane), and thus conserves the redox energy in a proton gradient. This is NADH-quinone oxidoreductase subunit C from Neisseria meningitidis serogroup A / serotype 4A (strain DSM 15465 / Z2491).